Reading from the N-terminus, the 260-residue chain is Adenosylcobinamide-GDP ribazoletransferase (260 aa).

The next 7 membrane-spanning stretches (helical) occupy residues 42-62 (PLAG…ANAI), 64-84 (LPPL…TGAL), 117-137 (FAAL…MAII), 144-164 (YALL…LAFW), 192-212 (GLGL…VALI), 214-234 (ALVL…AKIG), and 240-260 (TLGA…VMAL).

This sequence belongs to the CobS family. Requires Mg(2+) as cofactor.

It localises to the cell inner membrane. The enzyme catalyses alpha-ribazole + adenosylcob(III)inamide-GDP = adenosylcob(III)alamin + GMP + H(+). It catalyses the reaction alpha-ribazole 5'-phosphate + adenosylcob(III)inamide-GDP = adenosylcob(III)alamin 5'-phosphate + GMP + H(+). It functions in the pathway cofactor biosynthesis; adenosylcobalamin biosynthesis; adenosylcobalamin from cob(II)yrinate a,c-diamide: step 7/7. Functionally, joins adenosylcobinamide-GDP and alpha-ribazole to generate adenosylcobalamin (Ado-cobalamin). Also synthesizes adenosylcobalamin 5'-phosphate from adenosylcobinamide-GDP and alpha-ribazole 5'-phosphate. This is Adenosylcobinamide-GDP ribazoletransferase from Brucella abortus (strain S19).